We begin with the raw amino-acid sequence, 158 residues long: Transcriptional repressor NrdR (158 aa).

The segment at 3–34 (CPYCQSEDTQVKDSRPAEDGAVIRRRRVCSVC) is a zinc-finger region. An ATP-cone domain is found at 49–139 (LMVVKKSGRR…VYRNFSKAVD (91 aa)).

This sequence belongs to the NrdR family. Zn(2+) is required as a cofactor.

Negatively regulates transcription of bacterial ribonucleotide reductase nrd genes and operons by binding to NrdR-boxes. The protein is Transcriptional repressor NrdR of Brucella abortus (strain S19).